A 559-amino-acid chain; its full sequence is Potassium-transporting ATPase potassium-binding subunit (559 aa).

A run of 13 helical transmembrane segments spans residues 5–25 (GFLL…PLGS), 27–47 (LARL…RILW), 63–83 (LLAL…LLFW), 132–152 (GLTV…FALI), 170–190 (LVRI…LFFI), 253–273 (LAQM…FGEA), 283–303 (LLWA…WAEV), 327–347 (FGVL…CGAV), 356–376 (ALGG…FGGV), 379–399 (GLYG…LMIG), 416–436 (MTAL…ALAM), 484–504 (LLAF…MAIA), and 524–544 (GALF…LTFI).

The protein belongs to the KdpA family. In terms of assembly, the system is composed of three essential subunits: KdpA, KdpB and KdpC.

The protein localises to the cell inner membrane. In terms of biological role, part of the high-affinity ATP-driven potassium transport (or Kdp) system, which catalyzes the hydrolysis of ATP coupled with the electrogenic transport of potassium into the cytoplasm. This subunit binds the periplasmic potassium ions and delivers the ions to the membrane domain of KdpB through an intramembrane tunnel. The protein is Potassium-transporting ATPase potassium-binding subunit of Salmonella typhimurium (strain LT2 / SGSC1412 / ATCC 700720).